The following is a 559-amino-acid chain: CTP synthase (559 aa).

An amidoligase domain region spans residues 1–270; the sequence is MTKFVFVTGG…DGLICDKLRI (270 aa). S13 serves as a coordination point for CTP. S13 contributes to the UTP binding site. ATP is bound by residues 14–19 and D71; that span reads SLGKGI. The Mg(2+) site is built by D71 and E144. Residues 151–153, 191–196, and K227 each bind CTP; these read DIE and KTKPTQ. UTP contacts are provided by residues 191–196 and K227; that span reads KTKPTQ. One can recognise a Glutamine amidotransferase type-1 domain in the interval 295–547; it reads SIAMVGKYVD…IKAALDHKAR (253 aa). G356 serves as a coordination point for L-glutamine. The active-site Nucleophile; for glutamine hydrolysis is C383. Residues 384–387, E407, and R473 contribute to the L-glutamine site; that span reads LGMQ. Residues H520 and E522 contribute to the active site.

The protein belongs to the CTP synthase family. Homotetramer.

The catalysed reaction is UTP + L-glutamine + ATP + H2O = CTP + L-glutamate + ADP + phosphate + 2 H(+). The enzyme catalyses L-glutamine + H2O = L-glutamate + NH4(+). It carries out the reaction UTP + NH4(+) + ATP = CTP + ADP + phosphate + 2 H(+). It participates in pyrimidine metabolism; CTP biosynthesis via de novo pathway; CTP from UDP: step 2/2. With respect to regulation, allosterically activated by GTP, when glutamine is the substrate; GTP has no effect on the reaction when ammonia is the substrate. The allosteric effector GTP functions by stabilizing the protein conformation that binds the tetrahedral intermediate(s) formed during glutamine hydrolysis. Inhibited by the product CTP, via allosteric rather than competitive inhibition. Functionally, catalyzes the ATP-dependent amination of UTP to CTP with either L-glutamine or ammonia as the source of nitrogen. Regulates intracellular CTP levels through interactions with the four ribonucleotide triphosphates. In Variovorax paradoxus (strain S110), this protein is CTP synthase.